Reading from the N-terminus, the 205-residue chain is Holliday junction branch migration complex subunit RuvA (205 aa).

The interval 1-64 (MIGKLKGTID…EDQLKLFGFM (64 aa)) is domain I. A domain II region spans residues 65–143 (SALEREWFNL…AFTGDAGSAI (79 aa)). The flexible linker stretch occupies residues 144 to 153 (GLKQELGEGV). The tract at residues 153 to 205 (VASAPVSDAVSALTNLGYSRDQAANAIAAALKNGGEGADSAKLIRLGLKELSR) is domain III.

This sequence belongs to the RuvA family. Homotetramer. Forms an RuvA(8)-RuvB(12)-Holliday junction (HJ) complex. HJ DNA is sandwiched between 2 RuvA tetramers; dsDNA enters through RuvA and exits via RuvB. An RuvB hexamer assembles on each DNA strand where it exits the tetramer. Each RuvB hexamer is contacted by two RuvA subunits (via domain III) on 2 adjacent RuvB subunits; this complex drives branch migration. In the full resolvosome a probable DNA-RuvA(4)-RuvB(12)-RuvC(2) complex forms which resolves the HJ.

It localises to the cytoplasm. Functionally, the RuvA-RuvB-RuvC complex processes Holliday junction (HJ) DNA during genetic recombination and DNA repair, while the RuvA-RuvB complex plays an important role in the rescue of blocked DNA replication forks via replication fork reversal (RFR). RuvA specifically binds to HJ cruciform DNA, conferring on it an open structure. The RuvB hexamer acts as an ATP-dependent pump, pulling dsDNA into and through the RuvAB complex. HJ branch migration allows RuvC to scan DNA until it finds its consensus sequence, where it cleaves and resolves the cruciform DNA. This is Holliday junction branch migration complex subunit RuvA from Allorhizobium ampelinum (strain ATCC BAA-846 / DSM 112012 / S4) (Agrobacterium vitis (strain S4)).